A 1207-amino-acid polypeptide reads, in one-letter code: DNA-directed RNA polymerase subunit beta' (1207 aa).

Residues Cys60, Cys62, Cys75, and Cys78 each contribute to the Zn(2+) site. Positions 449, 451, and 453 each coordinate Mg(2+). The Zn(2+) site is built by Cys822, Cys896, Cys903, and Cys906.

The protein belongs to the RNA polymerase beta' chain family. The RNAP catalytic core consists of 2 alpha, 1 beta, 1 beta' and 1 omega subunit. When a sigma factor is associated with the core the holoenzyme is formed, which can initiate transcription. Mg(2+) serves as cofactor. Requires Zn(2+) as cofactor.

It carries out the reaction RNA(n) + a ribonucleoside 5'-triphosphate = RNA(n+1) + diphosphate. Functionally, DNA-dependent RNA polymerase catalyzes the transcription of DNA into RNA using the four ribonucleoside triphosphates as substrates. This Staphylococcus saprophyticus subsp. saprophyticus (strain ATCC 15305 / DSM 20229 / NCIMB 8711 / NCTC 7292 / S-41) protein is DNA-directed RNA polymerase subunit beta'.